The sequence spans 308 residues: Oxygen-dependent coproporphyrinogen-III oxidase (308 aa).

S100 is a binding site for substrate. Positions 104 and 114 each coordinate a divalent metal cation. H114 (proton donor) is an active-site residue. A substrate-binding site is contributed by N116–R118. H153 and H183 together coordinate a divalent metal cation. An important for dimerization region spans residues Y248–R283. Residue G266 to R268 coordinates substrate.

The protein belongs to the aerobic coproporphyrinogen-III oxidase family. Homodimer. The cofactor is a divalent metal cation.

The protein resides in the cytoplasm. It catalyses the reaction coproporphyrinogen III + O2 + 2 H(+) = protoporphyrinogen IX + 2 CO2 + 2 H2O. It participates in porphyrin-containing compound metabolism; protoporphyrin-IX biosynthesis; protoporphyrinogen-IX from coproporphyrinogen-III (O2 route): step 1/1. Functionally, involved in the heme biosynthesis. Catalyzes the aerobic oxidative decarboxylation of propionate groups of rings A and B of coproporphyrinogen-III to yield the vinyl groups in protoporphyrinogen-IX. This Francisella tularensis subsp. novicida (strain U112) protein is Oxygen-dependent coproporphyrinogen-III oxidase.